Reading from the N-terminus, the 66-residue chain is Small vasohibin-binding protein (66 aa).

Basic and acidic residues predominate over residues 1–23 (MDPPARKEKPKVKEPVSRIEKAK). The interval 1-32 (MDPPARKEKPKVKEPVSRIEKAKQKSAQQELK) is disordered. Residues 5 to 52 (ARKEKPKVKEPVSRIEKAKQKSAQQELKQRQRAEIYALNRVMTELEQQ) are a coiled coil.

This sequence belongs to the SVBP family. In terms of assembly, interacts with VASH1 and VASH2.

The protein resides in the cytoplasm. It is found in the secreted. It localises to the cytoskeleton. Its function is as follows. Enhances the tyrosine carboxypeptidase activity of VASH1 and VASH2, thereby promoting the removal of the C-terminal tyrosine residue of alpha-tubulin. Also required to enhance the solubility and secretion of VASH1 and VASH2. Plays a role in axon and excitatory synapse formation. The sequence is that of Small vasohibin-binding protein from Bos taurus (Bovine).